The primary structure comprises 467 residues: Retinoic acid receptor RXR-gamma (467 aa).

The modulating stretch occupies residues 1-142 (MYGNYPHFIK…TSPGSLAKHI (142 aa)). 2 consecutive NR C4-type zinc fingers follow at residues 143–163 (CAIC…CEGC) and 179–203 (CRDN…YQKC). A DNA-binding region (nuclear receptor) is located at residues 143–208 (CAICGDRSSG…RYQKCLAMGM (66 aa)). The tract at residues 209 to 232 (KREAVQEERQGSRERSENEAESTS) is hinge. A compositionally biased stretch (basic and acidic residues) spans 214–226 (QEERQGSRERSEN). A disordered region spans residues 214-237 (QEERQGSRERSENEAESTSGGSED). Positions 235 to 463 (SEDMPVERIL…TFLMEMLETP (229 aa)) constitute an NR LBD domain.

Belongs to the nuclear hormone receptor family. NR2 subfamily. Homodimer. Heterodimer; with a RAR molecule. Binds DNA preferentially as a RAR/RXR heterodimer. Isoform 1 is highly expressed inliver. Isoform 2 is abundantly expressed in eye and dorsal root ganglia.

The protein resides in the nucleus. Its function is as follows. Receptor for retinoic acid. Retinoic acid receptors bind as heterodimers to their target response elements in response to their ligands, all-trans or 9-cis retinoic acid, and regulate gene expression in various biological processes. The RAR/RXR heterodimers bind to the retinoic acid response elements (RARE) composed of tandem 5'-AGGTCA-3' sites known as DR1-DR5. The high affinity ligand for RXRs is 9-cis retinoic acid. This is Retinoic acid receptor RXR-gamma (RXRG) from Gallus gallus (Chicken).